The sequence spans 239 residues: tRNA (guanine-N(7)-)-methyltransferase (239 aa).

Glu-69, Glu-94, Asp-121, and Asp-144 together coordinate S-adenosyl-L-methionine. Residue Asp-144 is part of the active site. Substrate is bound at residue Lys-148. Residues 150–155 form an interaction with RNA region; it reads RHNKRR. Residues Asp-180 and 217–220 contribute to the substrate site; that span reads TKFE.

The protein belongs to the class I-like SAM-binding methyltransferase superfamily. TrmB family. As to quaternary structure, monomer.

It catalyses the reaction guanosine(46) in tRNA + S-adenosyl-L-methionine = N(7)-methylguanosine(46) in tRNA + S-adenosyl-L-homocysteine. It participates in tRNA modification; N(7)-methylguanine-tRNA biosynthesis. Its function is as follows. Catalyzes the formation of N(7)-methylguanine at position 46 (m7G46) in tRNA. This chain is tRNA (guanine-N(7)-)-methyltransferase, found in Escherichia coli O6:H1 (strain CFT073 / ATCC 700928 / UPEC).